The following is a 140-amino-acid chain: Nucleoside diphosphate kinase (140 aa).

Residues K11, F59, R87, T93, R104, and N114 each contribute to the ATP site. The Pros-phosphohistidine intermediate role is filled by H117.

Belongs to the NDK family. In terms of assembly, homotetramer. Mg(2+) serves as cofactor.

It is found in the cytoplasm. The enzyme catalyses a 2'-deoxyribonucleoside 5'-diphosphate + ATP = a 2'-deoxyribonucleoside 5'-triphosphate + ADP. It carries out the reaction a ribonucleoside 5'-diphosphate + ATP = a ribonucleoside 5'-triphosphate + ADP. Its function is as follows. Major role in the synthesis of nucleoside triphosphates other than ATP. The ATP gamma phosphate is transferred to the NDP beta phosphate via a ping-pong mechanism, using a phosphorylated active-site intermediate. The chain is Nucleoside diphosphate kinase from Bartonella tribocorum (strain CIP 105476 / IBS 506).